Consider the following 125-residue polypeptide: MAHKIAIGLVCVLYALHIMSAVCEVSEQEGVGEDNATEDEDYEDFFKPVTCYFANSTVGPLRPPNCTVVCTNNTAWWNDTKSDGGHCYSEYRPEKRTHSREIYNCTIGVCGNGTCIANHTYADCW.

Positions 1 to 21 (MAHKIAIGLVCVLYALHIMSA) are cleaved as a signal peptide. N-linked (GlcNAc...) asparagine glycans are attached at residues N35, N55, N65, N72, N78, N104, N112, and N118. Disulfide bonds link C70–C110, C87–C115, and C105–C124.

The protein resides in the secreted. Its function is as follows. Salivary chemokine-binding protein which has chemokine-neutralizing activity and binds to host chemokines CCL1, CCL2, CCL3, CCL3L1, CCL7, CCL8, CCL11, CCL12, CCL13, CCL14, CCL15, CCL16, CCL18 and CCL23. Binds to CCL8 with 1:1 stoichiometry and disrupts CCL8 homodimer formation. In Rhipicephalus pulchellus (Yellow backed tick), this protein is Evasin P672.